Here is a 311-residue protein sequence, read N- to C-terminus: MTELEDLPSVGEKTAQKLRDAGFADMMRLATATPKELSVKVEIGEGVAAKVIEAARKAEKIDFETAFEVMERREDVGRITTGSKGLDELIGGGIETQSITEVYGEFGSGKSQISHELSVTTQLPVEEGGLDGEVVFIDTENTFRPERIEQIAEGFGLNIEEVLKKIHVARAFNSSHQILMADKINELIQSGVNIKLIIIDSLMAHFRAEYVGRESLATRQQKLNQHLHTLQTIANTYNVAVLITNQVQSKPDSFFGTPTKAVGGHVLGHASTYRILLKKGLSGKRIARLVDSPHLPEGESVFKVTTEGLVD.

104 to 111 serves as a coordination point for ATP; that stretch reads GEFGSGKS.

The protein belongs to the eukaryotic RecA-like protein family.

In terms of biological role, involved in DNA repair and in homologous recombination. Binds and assemble on single-stranded DNA to form a nucleoprotein filament. Hydrolyzes ATP in a ssDNA-dependent manner and promotes DNA strand exchange between homologous DNA molecules. In Methanosphaera stadtmanae (strain ATCC 43021 / DSM 3091 / JCM 11832 / MCB-3), this protein is DNA repair and recombination protein RadA.